The chain runs to 652 residues: Thioredoxin reductase 3 (652 aa).

Residues 1–12 (MEKPPSPPPPPR) are compositionally biased toward pro residues. The disordered stretch occupies residues 1–62 (MEKPPSPPPP…TSRPSSEARE (62 aa)). Arginine 34 carries the post-translational modification Asymmetric dimethylarginine; alternate. Arginine 34 carries the omega-N-methylarginine; alternate modification. Position 50 is a phosphoserine (serine 50). The 101-residue stretch at 65 to 165 (RRRLRDLIEG…KLLQDDSAHD (101 aa)) folds into the Glutaredoxin domain. Residue 167–196 (DLIIIGGGSGGLSCAKEAANLGKKVMVLDF) participates in FAD binding. Cysteine 212 and cysteine 217 are oxidised to a cystine. Lysine 388 carries the post-translational modification N6-succinyllysine. The active-site Proton acceptor is histidine 625. Residues 650–651 (CU) constitute a cross-link (cysteinyl-selenocysteine (Cys-Sec)). Position 651 (selenocysteine 651) is a non-standard amino acid, selenocysteine.

Belongs to the class-I pyridine nucleotide-disulfide oxidoreductase family. As to quaternary structure, homodimer. The cofactor is FAD. In terms of tissue distribution, expressed preferentially in testis where it is found in spermatids and spermatocytes but not in sperm. In elongating spermatids, expressed at the site of mitochondrial sheath formation. Low levels in other tissues including heart, lung, liver, kidney, brain, muscle and prostate.

It localises to the cytoplasm. It is found in the nucleus. The protein localises to the microsome. Its subcellular location is the endoplasmic reticulum. The enzyme catalyses [thioredoxin]-dithiol + NADP(+) = [thioredoxin]-disulfide + NADPH + H(+). Displays thioredoxin reductase, glutaredoxin and glutathione reductase activities. Catalyzes disulfide bond isomerization. Promotes disulfide bond formation between GPX4 and various sperm proteins and may play a role in sperm maturation by promoting formation of sperm structural components. This chain is Thioredoxin reductase 3, found in Mus musculus (Mouse).